Consider the following 121-residue polypeptide: Large ribosomal subunit protein bL12 (121 aa).

It belongs to the bacterial ribosomal protein bL12 family. As to quaternary structure, homodimer. Part of the ribosomal stalk of the 50S ribosomal subunit. Forms a multimeric L10(L12)X complex, where L10 forms an elongated spine to which 2 to 4 L12 dimers bind in a sequential fashion. Binds GTP-bound translation factors.

Forms part of the ribosomal stalk which helps the ribosome interact with GTP-bound translation factors. Is thus essential for accurate translation. The sequence is that of Large ribosomal subunit protein bL12 from Aeromonas hydrophila subsp. hydrophila (strain ATCC 7966 / DSM 30187 / BCRC 13018 / CCUG 14551 / JCM 1027 / KCTC 2358 / NCIMB 9240 / NCTC 8049).